The following is a 218-amino-acid chain: Small ribosomal subunit protein uS3c (218 aa).

One can recognise a KH type-2 domain in the interval 47–118; that stretch reads VQKNIRISSG…KLNIAITRIS (72 aa).

The protein belongs to the universal ribosomal protein uS3 family. Part of the 30S ribosomal subunit.

It localises to the plastid. It is found in the chloroplast. This Aethionema cordifolium (Lebanon stonecress) protein is Small ribosomal subunit protein uS3c (rps3).